Consider the following 190-residue polypeptide: uncharacterized protein (190 aa).

This is an uncharacterized protein from Archaeoglobus fulgidus (strain ATCC 49558 / DSM 4304 / JCM 9628 / NBRC 100126 / VC-16).